The chain runs to 478 residues: Chromosomal replication initiator protein DnaA (478 aa).

Residues 1–82 (MHTMNKTAES…ELGKNAKLLY (82 aa)) are domain I, interacts with DnaA modulators. The domain II stretch occupies residues 82 to 140 (YKIKMENTYGNKLPFTEQLPSAHRSPVRTQEIDVPVQQKNPELRNPFIIPGIRNLKIES). Residues 141-358 (QLNANYSFDN…GAIISLIAQS (218 aa)) are domain III, AAA+ region. Positions 186, 188, 189, and 190 each coordinate ATP. The tract at residues 359 to 478 (SFNKKEVTLE…VDDINKKLSL (120 aa)) is domain IV, binds dsDNA.

This sequence belongs to the DnaA family. As to quaternary structure, oligomerizes as a right-handed, spiral filament on DNA at oriC.

It localises to the cytoplasm. Functionally, plays an essential role in the initiation and regulation of chromosomal replication. ATP-DnaA binds to the origin of replication (oriC) to initiate formation of the DNA replication initiation complex once per cell cycle. Binds the DnaA box (a 9 base pair repeat at the origin) and separates the double-stranded (ds)DNA. Forms a right-handed helical filament on oriC DNA; dsDNA binds to the exterior of the filament while single-stranded (ss)DNA is stabiized in the filament's interior. The ATP-DnaA-oriC complex binds and stabilizes one strand of the AT-rich DNA unwinding element (DUE), permitting loading of DNA polymerase. After initiation quickly degrades to an ADP-DnaA complex that is not apt for DNA replication. Binds acidic phospholipids. This chain is Chromosomal replication initiator protein DnaA, found in Flavobacterium psychrophilum (strain ATCC 49511 / DSM 21280 / CIP 103535 / JIP02/86).